The primary structure comprises 95 residues: Large ribosomal subunit protein bL25 (95 aa).

The protein belongs to the bacterial ribosomal protein bL25 family. Part of the 50S ribosomal subunit; part of the 5S rRNA/L5/L18/L25 subcomplex. Contacts the 5S rRNA. Binds to the 5S rRNA independently of L5 and L18.

In terms of biological role, this is one of the proteins that binds to the 5S RNA in the ribosome where it forms part of the central protuberance. This chain is Large ribosomal subunit protein bL25, found in Aeromonas salmonicida (strain A449).